The sequence spans 338 residues: UDP-N-acetylenolpyruvoylglucosamine reductase (338 aa).

The FAD-binding PCMH-type domain maps to 17 to 188; that stretch reads IAARTDWWID…MYVDYRLRLK (172 aa). Residue Arg-164 is part of the active site. Catalysis depends on Ser-237, which acts as the Proton donor. The active site involves Glu-333.

The protein belongs to the MurB family. It depends on FAD as a cofactor.

It is found in the cytoplasm. The catalysed reaction is UDP-N-acetyl-alpha-D-muramate + NADP(+) = UDP-N-acetyl-3-O-(1-carboxyvinyl)-alpha-D-glucosamine + NADPH + H(+). It functions in the pathway cell wall biogenesis; peptidoglycan biosynthesis. Cell wall formation. In Porphyromonas gingivalis (strain ATCC BAA-308 / W83), this protein is UDP-N-acetylenolpyruvoylglucosamine reductase.